The chain runs to 579 residues: CTP synthase 1 (579 aa).

A Glutamine amidotransferase type-1 domain is found at 305 to 559 (KIALVGKYTN…LGLVAASAGI (255 aa)). Catalysis depends on Cys-404, which acts as the For GATase activity. A Glycyl lysine isopeptide (Lys-Gly) (interchain with G-Cter in ubiquitin) cross-link involves residue Lys-422. Active-site for GATase activity residues include His-535 and Glu-537.

It belongs to the CTP synthase family. Homodimer. Oligomerizes to a tetramer in the presence of its substrates UTP and ATP.

It carries out the reaction UTP + L-glutamine + ATP + H2O = CTP + L-glutamate + ADP + phosphate + 2 H(+). The protein operates within pyrimidine metabolism; CTP biosynthesis via de novo pathway; CTP from UDP: step 2/2. With respect to regulation, activated by GTP and inhibited by CTP. Its function is as follows. Catalyzes the ATP-dependent amination of UTP to CTP with either L-glutamine or ammonia as the source of nitrogen. The chain is CTP synthase 1 (URA7) from Saccharomyces cerevisiae (strain ATCC 204508 / S288c) (Baker's yeast).